Consider the following 350-residue polypeptide: Phenylalanine--tRNA ligase alpha subunit (350 aa).

Residue glutamate 271 coordinates Mg(2+).

It belongs to the class-II aminoacyl-tRNA synthetase family. Phe-tRNA synthetase alpha subunit type 1 subfamily. In terms of assembly, tetramer of two alpha and two beta subunits. The cofactor is Mg(2+).

It is found in the cytoplasm. The enzyme catalyses tRNA(Phe) + L-phenylalanine + ATP = L-phenylalanyl-tRNA(Phe) + AMP + diphosphate + H(+). This is Phenylalanine--tRNA ligase alpha subunit from Acidovorax ebreus (strain TPSY) (Diaphorobacter sp. (strain TPSY)).